A 108-amino-acid chain; its full sequence is Large ribosomal subunit protein bL21c (108 aa).

Belongs to the bacterial ribosomal protein bL21 family. As to quaternary structure, part of the 50S ribosomal subunit.

It is found in the plastid. The protein localises to the chloroplast. In terms of biological role, this protein binds to 23S rRNA. The chain is Large ribosomal subunit protein bL21c from Cyanidium caldarium (Red alga).